The sequence spans 446 residues: tRNA-2-methylthio-N(6)-dimethylallyladenosine synthase (446 aa).

Positions Lys2 to Glu122 constitute an MTTase N-terminal domain. [4Fe-4S] cluster-binding residues include Cys11, Cys47, Cys85, Cys157, Cys161, and Cys164. The 233-residue stretch at Arg143–Ala375 folds into the Radical SAM core domain. Residues Ala378 to Glu440 form the TRAM domain.

Belongs to the methylthiotransferase family. MiaB subfamily. Monomer. [4Fe-4S] cluster is required as a cofactor.

It localises to the cytoplasm. It carries out the reaction N(6)-dimethylallyladenosine(37) in tRNA + (sulfur carrier)-SH + AH2 + 2 S-adenosyl-L-methionine = 2-methylsulfanyl-N(6)-dimethylallyladenosine(37) in tRNA + (sulfur carrier)-H + 5'-deoxyadenosine + L-methionine + A + S-adenosyl-L-homocysteine + 2 H(+). Functionally, catalyzes the methylthiolation of N6-(dimethylallyl)adenosine (i(6)A), leading to the formation of 2-methylthio-N6-(dimethylallyl)adenosine (ms(2)i(6)A) at position 37 in tRNAs that read codons beginning with uridine. The protein is tRNA-2-methylthio-N(6)-dimethylallyladenosine synthase of Methylorubrum extorquens (strain PA1) (Methylobacterium extorquens).